A 108-amino-acid chain; its full sequence is Abdominal ganglion neuropeptide R3-14 (108 aa).

The N-terminal stretch at 1–23 (MQVLHLCLAVSIAVALLSQAAWS) is a signal peptide. A pyrrolidone carboxylic acid (Glu); partial mark is found at glutamate 24 and glutamate 52. At glutamine 66 the chain carries Pyrrolidone carboxylic acid.

The partial formation of pyroglutamate from N-terminal glutamic acid in peptides isolated from single cells is detected by mass spectrometry. There are indications this modification depends on a heat sensitive factor. As to expression, neurons R3-R14. A cluster of 12 giant neurons located on the right side of the abdominal ganglion.

It is found in the secreted. Functionally, HRBP is a myoactive peptide that excites Aplysia heart and enhances gut motility in vitro. This chain is Abdominal ganglion neuropeptide R3-14, found in Aplysia californica (California sea hare).